The sequence spans 203 residues: Endo-type membrane-bound lytic murein transglycosylase A (203 aa).

A signal peptide spans 1-15 (MKLRWFAFLVVILAG). The N-palmitoyl cysteine moiety is linked to residue cysteine 16. Cysteine 16 carries the S-diacylglycerol cysteine lipid modification.

Belongs to the transglycosylase Slt family.

It localises to the cell outer membrane. It carries out the reaction Endolytic cleavage of the (1-&gt;4)-beta-glycosidic linkage between N-acetylmuramic acid (MurNAc) and N-acetylglucosamine (GlcNAc) residues in peptidoglycan with concomitant formation of a 1,6-anhydrobond in the MurNAc residue.. Functionally, murein-degrading enzyme. May play a role in recycling of muropeptides during cell elongation and/or cell division. Preferentially cleaves at a distance of more than two disaccharide units from the ends of the glycan chain. The chain is Endo-type membrane-bound lytic murein transglycosylase A from Salmonella paratyphi C (strain RKS4594).